A 349-amino-acid polypeptide reads, in one-letter code: Core protein VP7 (349 aa).

Asn-287 carries an N-linked (GlcNAc...) asparagine; by host glycan.

The protein belongs to the orbivirus VP7 family. Homotrimer that assemble in a complex of 260 capsomers on an inner scaffold composed of VP3.

Its subcellular location is the virion. Its function is as follows. The VP7 protein is one of the five proteins (with VP1, VP3, VP4, and VP6) which form the inner capsid of the virus. This is Core protein VP7 (Segment-7) from Antilocapra americana (Pronghorn).